A 458-amino-acid chain; its full sequence is ATP synthase subunit beta (458 aa).

148 to 155 (GGAGVGKT) contributes to the ATP binding site.

Belongs to the ATPase alpha/beta chains family. F-type ATPases have 2 components, CF(1) - the catalytic core - and CF(0) - the membrane proton channel. CF(1) has five subunits: alpha(3), beta(3), gamma(1), delta(1), epsilon(1). CF(0) has three main subunits: a(1), b(2) and c(9-12). The alpha and beta chains form an alternating ring which encloses part of the gamma chain. CF(1) is attached to CF(0) by a central stalk formed by the gamma and epsilon chains, while a peripheral stalk is formed by the delta and b chains.

It is found in the cell inner membrane. It catalyses the reaction ATP + H2O + 4 H(+)(in) = ADP + phosphate + 5 H(+)(out). Its function is as follows. Produces ATP from ADP in the presence of a proton gradient across the membrane. The catalytic sites are hosted primarily by the beta subunits. This chain is ATP synthase subunit beta, found in Pseudomonas putida (strain ATCC 700007 / DSM 6899 / JCM 31910 / BCRC 17059 / LMG 24140 / F1).